The following is a 393-amino-acid chain: MESLLSSSSLVSAAGGFCWKKQNLKLHSLSEIRVLRCDSSKVVAKPKFRNNLVRPDGQGSSLLLYPKHKSRFRVNATAGQPEAFDSNSKQKSFRDSLDAFYRFSRPHTVIGTVLSILSVSFLAVEKVSDISPLLFTGILEAVVAALMMNIYIVGLNQLSDVEIDKVNKPYLPLASGEYSVNTGIAIVASFSIMSFWLGWIVGSWPLFWALFVSFMLGTAYSINLPLLRWKRFALVAAMCILAVRAIIVQIAFYLHIQTHVFGRPILFTRPLIFATAFMSFFSVVIALFKDIPDIEGDKIFGIRSFSVTLGQKRVFWTCVTLLQMAYAVAILVGATSPFIWSKVISVVGHVILATTLWARAKSVDLSSKTEITSCYMFIWKLFYAEYLLLPFLK.

Residues 1-36 (MESLLSSSSLVSAAGGFCWKKQNLKLHSLSEIRVLR) constitute a chloroplast transit peptide. 9 helical membrane passes run 108-128 (TVIG…EKVS), 133-153 (LLFT…IYIV), 170-190 (YLPL…VASF), 205-227 (PLFW…LPLL), 232-252 (FALV…QIAF), 271-291 (LIFA…FKDI), 314-334 (VFWT…LVGA), 338-358 (FIWS…TLWA), and 371-391 (ITSC…LLPF).

It belongs to the UbiA prenyltransferase family.

It is found in the plastid. It localises to the chloroplast membrane. The enzyme catalyses phytyl diphosphate + homogentisate + H(+) = 2-methyl-6-phytyl-1,4-benzene-1,4-diol + CO2 + diphosphate. It participates in cofactor biosynthesis; tocopherol biosynthesis. In terms of biological role, involved in the synthesis of tocopherol (vitamin E). Catalyzes the condensation of homogentisate and phytyl diphosphate to form dimethylphytylhydrquinone. Low activity with geranylgeranyl diphosphate as substrate, but no activity with farnesyl diphosphate or solanesyl diphosphate. Tocopherol functions to limit lipid oxidation during seed desiccation, quiescence and germination and early seedling development. Protects thylakoid membrane lipids from photooxidation and is required for low-temperature adaptation. The chain is Homogentisate phytyltransferase 1, chloroplastic (HPT1) from Arabidopsis thaliana (Mouse-ear cress).